The following is a 54-amino-acid chain: Ovomucoid (54 aa).

Residues 4 to 54 (VDCSDYPKPACSLDYMPLCGSDSKTYSNKCNFCNAVVDSNGTLTLSHFEKC) form the Kazal-like domain. 3 cysteine pairs are disulfide-bonded: Cys-6-Cys-36, Cys-14-Cys-33, and Cys-22-Cys-54. An N-linked (GlcNAc...) asparagine glycan is attached at Asn-43.

It is found in the secreted. This Chroicocephalus ridibundus (Black-headed gull) protein is Ovomucoid.